Here is a 392-residue protein sequence, read N- to C-terminus: Succinate--CoA ligase [ADP-forming] subunit beta (392 aa).

The 240-residue stretch at 9-248 (KGLFRDYGVS…LHEEDPTEVK (240 aa)) folds into the ATP-grasp domain. Residues Lys-50, 57–59 (GRG), Val-106, and Glu-111 contribute to the ATP site. The Mg(2+) site is built by Asn-203 and Asp-217. Substrate contacts are provided by residues Asn-268 and 325–327 (GIV).

The protein belongs to the succinate/malate CoA ligase beta subunit family. In terms of assembly, heterotetramer of two alpha and two beta subunits. Mg(2+) serves as cofactor.

The enzyme catalyses succinate + ATP + CoA = succinyl-CoA + ADP + phosphate. It carries out the reaction GTP + succinate + CoA = succinyl-CoA + GDP + phosphate. It participates in carbohydrate metabolism; tricarboxylic acid cycle; succinate from succinyl-CoA (ligase route): step 1/1. In terms of biological role, succinyl-CoA synthetase functions in the citric acid cycle (TCA), coupling the hydrolysis of succinyl-CoA to the synthesis of either ATP or GTP and thus represents the only step of substrate-level phosphorylation in the TCA. The beta subunit provides nucleotide specificity of the enzyme and binds the substrate succinate, while the binding sites for coenzyme A and phosphate are found in the alpha subunit. The polypeptide is Succinate--CoA ligase [ADP-forming] subunit beta (Salinibacter ruber (strain DSM 13855 / M31)).